The following is a 700-amino-acid chain: MSFRSSPQGKPHPMTDYQSIRPSEVEQLFEKKFHYQKPKGNKSWQLPPPDQALFSEFYQFEALQGLREQLNAVKSKLNDYGVQEWSAHTNRRDPSGEVSWRLKNDTKAEFVTVAWCKLFECLHRYPLVTKPAVNSMHLCEAPGAFIASLNHYLHSKYEKDEIKWRWRSTTLNPYYEGNAINQMISDDRFIVHTLDNWFFHKDLTGNLLDVANIDHLVERCEVEFQGQVDLVTADGSIDCAAQPDCQEEIVVRLFFAEVLSALRILSSGGNFLVKMFTLFEACSVSLLYTLNCIFEEVHIFKPATSKRGNSEVYVICLNYNKDHPDLPRLLEEIKSKLAQPNDTLVMPLFAKFQIPHDFLMQHEIACRMYMKLQTDAIEGSIYAYESNDRHYLRHLHHLRSLVANTYYSLYKVKPLEDSLCIVDKEATSKALGFQVPVYGGSYTERESLKHGDLLKQIYCLRREFNQLEKCLNNRTPYSYVKNRTAPLNLHISRGAPVQSLQSSMFASEPILILRLRILDTFELDPVWQSAPKCQLESKTLCYLPPTEDEAFHTAQQRFFIDLLEEVKKLKPDSIVFHKFLFLTHYAASLLLFLIESVYQDCCFNSNQAQTLTLSKLKDTANSALEQVLELLKDEQAGAIHSLLDIKELQKNQFSKALIQHNNSIVMTCFRSMLGEESFPMPVAPTSNSDVGSIQESAAVF.

The disordered stretch occupies residues 1–21 (MSFRSSPQGKPHPMTDYQSIR). The Adrift-type SAM-dependent 2'-O-MTase domain occupies 109–321 (EFVTVAWCKL…VYVICLNYNK (213 aa)). Lys-117 is an active-site residue. Positions 143, 164, and 234 each coordinate S-adenosyl-L-methionine. Residue Asp-234 is part of the active site. Lys-274 acts as the Proton acceptor in catalysis.

The protein resides in the nucleus. The enzyme catalyses a 5'-end (N(7)-methyl 5'-triphosphoguanosine)-(2'-O-methyl-ribonucleoside)-(ribonucleotide) in mRNA + S-adenosyl-L-methionine = a 5'-end (N(7)-methyl 5'-triphosphoguanosine)-(2'-O-methyl-ribonucleoside)-(2'-O-methyl-ribonucleotide) in mRNA + S-adenosyl-L-homocysteine + H(+). In terms of biological role, probable S-adenosyl-L-methionine-dependent methyltransferase that mediates mRNA cap2 2'-O-ribose methylation to the 5'-cap structure of mRNAs. May methylate the ribose of the second nucleotide of a m(7)GpppG-capped mRNA (cap0) to produce m(7)GpppRmpNm (cap2). Regulates expression of tracheal genes required for pathfinding on the segmental nerve. This chain is Cap-specific mRNA (nucleoside-2'-O-)-methyltransferase 2 (cmtr2), found in Drosophila melanogaster (Fruit fly).